Reading from the N-terminus, the 527-residue chain is Glutamate--cysteine ligase (527 aa).

The protein belongs to the glutamate--cysteine ligase type 1 family. Type 1 subfamily.

The catalysed reaction is L-cysteine + L-glutamate + ATP = gamma-L-glutamyl-L-cysteine + ADP + phosphate + H(+). The protein operates within sulfur metabolism; glutathione biosynthesis; glutathione from L-cysteine and L-glutamate: step 1/2. The chain is Glutamate--cysteine ligase from Pseudomonas aeruginosa (strain ATCC 15692 / DSM 22644 / CIP 104116 / JCM 14847 / LMG 12228 / 1C / PRS 101 / PAO1).